Consider the following 465-residue polypeptide: Ribulose bisphosphate carboxylase large chain (465 aa).

At Lys4 the chain carries N6,N6,N6-trimethyllysine. Residues Xaa113 and Thr163 each contribute to the substrate site. Lys165 serves as the catalytic Proton acceptor. Lys167 serves as a coordination point for substrate. Mg(2+)-binding residues include Lys191, Asp193, and Glu194. Lys191 is modified (N6-carboxylysine). His284 acts as the Proton acceptor in catalysis. Residues Arg285, His317, and Ser369 each coordinate substrate.

The protein belongs to the RuBisCO large chain family. Type I subfamily. Heterohexadecamer of 8 large chains and 8 small chains; disulfide-linked. The disulfide link is formed within the large subunit homodimers. It depends on Mg(2+) as a cofactor. In terms of processing, the disulfide bond which can form in the large chain dimeric partners within the hexadecamer appears to be associated with oxidative stress and protein turnover.

It is found in the plastid. It localises to the chloroplast. It catalyses the reaction 2 (2R)-3-phosphoglycerate + 2 H(+) = D-ribulose 1,5-bisphosphate + CO2 + H2O. It carries out the reaction D-ribulose 1,5-bisphosphate + O2 = 2-phosphoglycolate + (2R)-3-phosphoglycerate + 2 H(+). Functionally, ruBisCO catalyzes two reactions: the carboxylation of D-ribulose 1,5-bisphosphate, the primary event in carbon dioxide fixation, as well as the oxidative fragmentation of the pentose substrate in the photorespiration process. Both reactions occur simultaneously and in competition at the same active site. The polypeptide is Ribulose bisphosphate carboxylase large chain (Cornus obliqua (Silky dogwood)).